The chain runs to 393 residues: 6-hydroxy-3-succinoylpyridine 3-monooxygenase HspB (393 aa).

FAD contacts are provided by residues 6 to 35 (RVII…VLEA) and 277 to 287 (MRNGRVILIGD).

Belongs to the PheA/TfdB FAD monooxygenase family. Homodimer. The cofactor is FAD.

The catalysed reaction is 4-(6-hydroxypyridin-3-yl)-4-oxobutanoate + 2 NADH + O2 + 2 H(+) = 2,5-dihydroxypyridine + succinate semialdehyde + 2 NAD(+) + H2O. It functions in the pathway alkaloid degradation; nicotine degradation. Inhibited by Cu(2+) and Zn(2+). In terms of biological role, involved in the nicotine degradation. Catalyzes the cleavage of 6-hydroxy-3-succinoylpyridine (HSP) by incorporation of oxygen at the 3-position to produce to 2,5-dihydroxypyridine (DHP) and succinic semialdehyde. This Pseudomonas putida (strain DSM 28022 / S16) protein is 6-hydroxy-3-succinoylpyridine 3-monooxygenase HspB.